The primary structure comprises 428 residues: Elongation factor 1-alpha (428 aa).

Positions 5–217 constitute a tr-type G domain; it reads KPHVNIVFIG…DQIPEPEKPV (213 aa). The segment at 14-21 is G1; it reads GHVDHGKS. A GTP-binding site is contributed by 14–21; the sequence is GHVDHGKS. Mg(2+) is bound at residue Ser21. The G2 stretch occupies residues 68 to 72; it reads GITID. Residues 89–92 form a G3 region; the sequence is DAPG. GTP-binding positions include 89 to 93 and 144 to 147; these read DAPGH and NKMD. The G4 stretch occupies residues 144–147; that stretch reads NKMD. The interval 181–183 is G5; the sequence is SAW.

This sequence belongs to the TRAFAC class translation factor GTPase superfamily. Classic translation factor GTPase family. EF-Tu/EF-1A subfamily.

The protein resides in the cytoplasm. It carries out the reaction GTP + H2O = GDP + phosphate + H(+). Its function is as follows. GTP hydrolase that promotes the GTP-dependent binding of aminoacyl-tRNA to the A-site of ribosomes during protein biosynthesis. The chain is Elongation factor 1-alpha from Pyrococcus abyssi (strain GE5 / Orsay).